Reading from the N-terminus, the 123-residue chain is WAP four-disulfide core domain protein 5 (123 aa).

A signal peptide spans M1–G24. WAP domains lie at K27–R73 and V74–A121. 8 cysteine pairs are disulfide-bonded: C34–C62, C41–C66, C49–C61, C55–C70, C81–C109, C88–C113, C96–C108, and C102–C117.

Its subcellular location is the secreted. Functionally, putative acid-stable proteinase inhibitor. In Saimiri boliviensis boliviensis (Bolivian squirrel monkey), this protein is WAP four-disulfide core domain protein 5 (WFDC5).